A 545-amino-acid chain; its full sequence is Resolvase homolog YokA (545 aa).

The Resolvase/invertase-type recombinase catalytic domain occupies N14 to G165. Residues L19–K46 are a coiled coil. The O-(5'-phospho-DNA)-serine intermediate role is filled by S22. Residues P173 to L303 constitute a DNA-binding region (recombinase). Residues N402–N475 are a coiled coil.

It in the N-terminal section; belongs to the site-specific recombinase resolvase family.

In Bacillus subtilis (strain 168), this protein is Resolvase homolog YokA (yokA).